The primary structure comprises 468 residues: MTSCSSFSGGKACRPADDSALTPLVADKAAAHPCYSRHGHHRFARMHLPVAPACNLQCNYCNRKFDCSNESRPGVSSTLLTPEQAVVKVRQVAQAIPQLSVVGIAGPGDPLANIARTFRTLELIREQLPDLKLCLSTNGLVLPDAVDRLLDVGVDHVTVTINTLDAEIAAQIYAWLWLDGERYSGREAGEILIARQLEGVRRLTAKGVLVKINSVLIPGINDSGMAGVSRALRASGAFIHNIMPLIARPEHGTVFGLNGQPEPDAETLAATRSRCGEVMPQMTHCHQCRADAIGMLGEDRSQQFTQLPAPESLPAWLPILHQRAQLHASIATRGESEADDACLVAVASSRGDVIDCHFGHADRFYIYSLSAAGMVLVNERFTPKYCQGRDDCEPQDNAARFAAILELLADVKAVFCVRIGHTPWQQLEQEGIEPCVDGAWRPVSEVLPAWWQQRRGSWPAALPHKGVA.

In terms of domain architecture, Radical SAM core spans 40-289 (HHRFARMHLP…PQMTHCHQCR (250 aa)). 2 residues coordinate [4Fe-4S] cluster: cysteine 54 and cysteine 58. Residue tyrosine 60 coordinates S-adenosyl-L-methionine. Cysteine 61 contributes to the [4Fe-4S] cluster binding site. Glycine 108, threonine 160, and isoleucine 212 together coordinate S-adenosyl-L-methionine. [4Fe-4S] cluster-binding residues include cysteine 285 and cysteine 288.

The protein belongs to the radical SAM superfamily. NifB family. Requires [4Fe-4S] cluster as cofactor.

It functions in the pathway cofactor biosynthesis; Fe-Mo cofactor biosynthesis. In terms of biological role, involved in the biosynthesis of the iron-molybdenum cofactor (FeMo-co or M-cluster) found in the dinitrogenase enzyme of the nitrogenase complex in nitrogen-fixing microorganisms. NifB catalyzes the crucial step of radical SAM-dependent carbide insertion that occurs concomitant with the insertion of a 9th sulfur and the rearrangement/coupling of two [4Fe-4S] clusters into a [8Fe-9S-C] cluster, the precursor to the M-cluster. In Klebsiella pneumoniae, this protein is FeMo cofactor biosynthesis protein NifB (nifB).